Consider the following 581-residue polypeptide: ATP-dependent lipid A-core flippase (581 aa).

5 consecutive transmembrane segments (helical) span residues Leu15–Leu35, Leu68–Ile88, Ile152–Val172, Pro252–Pro272, and Ile274–Met294. Positions Ile27–Arg309 constitute an ABC transmembrane type-1 domain. The region spanning Ile341 to Met577 is the ABC transporter domain. Gly375 to Ser382 provides a ligand contact to ATP.

Belongs to the ABC transporter superfamily. Lipid exporter (TC 3.A.1.106) family. In terms of assembly, homodimer.

It is found in the cell inner membrane. It catalyses the reaction ATP + H2O + lipid A-core oligosaccharideSide 1 = ADP + phosphate + lipid A-core oligosaccharideSide 2.. Functionally, involved in lipopolysaccharide (LPS) biosynthesis. Translocates lipid A-core from the inner to the outer leaflet of the inner membrane. Transmembrane domains (TMD) form a pore in the inner membrane and the ATP-binding domain (NBD) is responsible for energy generation. This Photorhabdus laumondii subsp. laumondii (strain DSM 15139 / CIP 105565 / TT01) (Photorhabdus luminescens subsp. laumondii) protein is ATP-dependent lipid A-core flippase.